A 261-amino-acid polypeptide reads, in one-letter code: Small ribosomal subunit protein uS2 (261 aa).

The protein belongs to the universal ribosomal protein uS2 family.

The chain is Small ribosomal subunit protein uS2 from Enterococcus faecalis (strain ATCC 700802 / V583).